The chain runs to 629 residues: Serine/threonine-protein kinase ICK (629 aa).

A Protein kinase domain is found at Tyr4–Phe284. ATP contacts are provided by residues Leu10 to Val18 and Lys33. The active-site Proton acceptor is Asp125. The residue at position 157 (Thr157) is a Phosphothreonine. Tyr159 bears the Phosphotyrosine mark. Ser161 is modified (phosphoserine). Disordered regions lie at residues Ile292–Ala322, Pro454–Ala482, and Gly579–Arg629. The segment covering Gly309–Gln321 has biased composition (pro residues). A compositionally biased stretch (polar residues) spans Thr460–Ala482.

It belongs to the protein kinase superfamily. CMGC Ser/Thr protein kinase family. CDC2/CDKX subfamily. The cofactor is Mg(2+). Autophosphorylated on serine and threonine residues. Phosphorylation at Thr-157 increases kinase activity. Expressed in embryonic heart from day 11. Highly expressed in the uterus and at lower levels in brain, heart, lung, kidney, skeletal muscle, ovary and liver in adult tissues.

The protein resides in the cytoplasm. The protein localises to the cell projection. Its subcellular location is the cilium. It is found in the nucleus. It localises to the cytoskeleton. The protein resides in the cilium basal body. The enzyme catalyses L-seryl-[protein] + ATP = O-phospho-L-seryl-[protein] + ADP + H(+). The catalysed reaction is L-threonyl-[protein] + ATP = O-phospho-L-threonyl-[protein] + ADP + H(+). Its function is as follows. Required for ciliogenesis, particularly in neuronal and retinal progenitor cells. Phosphorylates KIF3A. Involved in the control of ciliary length. Regulates the ciliary localization of SHH pathway components as well as the localization of IFT components at ciliary tips. May play a role in cardiac development. Regulates intraflagellar transport (IFT) speed and negatively regulates cilium length in a cAMP and mTORC1 signaling-dependent manner and this regulation requires its kinase activity. The chain is Serine/threonine-protein kinase ICK (Cilk1) from Rattus norvegicus (Rat).